Consider the following 490-residue polypeptide: Cytochrome P450 90D2 (490 aa).

A helical membrane pass occupies residues 4-24 (AAAGWAAPAFAVAAVVIWVVL). Residue Cys-437 coordinates heme.

This sequence belongs to the cytochrome P450 family. Heme serves as cofactor. In terms of tissue distribution, expressed at low levels leaf blades, shoot apex and elongating stem.

It localises to the membrane. The catalysed reaction is 6-deoxoteasterone + reduced [NADPH--hemoprotein reductase] + O2 = 3-dehydro-6-deoxoteasterone + oxidized [NADPH--hemoprotein reductase] + 2 H2O + H(+). Its pathway is plant hormone biosynthesis; brassinosteroid biosynthesis. In terms of biological role, catalyzes the C6-oxidation step in brassinosteroids biosynthesis. May convert 6-deoxoteasterone (6-deoxoTE) to 3-dehydro-6-deoxoteasterone (6-deoxo3DT, 6-deoxo3DHT), and teasterone (TE) to 3-dehydroteasterone (3DT, 3-DHT). Involved in the elongation of leaf sheaths and stems. In Oryza sativa subsp. japonica (Rice), this protein is Cytochrome P450 90D2.